The chain runs to 530 residues: Light-independent protochlorophyllide reductase subunit B (530 aa).

Aspartate 36 lines the [4Fe-4S] cluster pocket. Residue aspartate 290 is the Proton donor of the active site. Position 425 to 426 (425 to 426 (GL)) interacts with substrate. The disordered stretch occupies residues 448-483 (LGHLGGHASETKTSSKGINQSPNNHSPAGESIHWTS). The span at 458–473 (TKTSSKGINQSPNNHS) shows a compositional bias: polar residues.

Belongs to the ChlB/BchB/BchZ family. As to quaternary structure, protochlorophyllide reductase is composed of three subunits; ChlL, ChlN and ChlB. Forms a heterotetramer of two ChlB and two ChlN subunits. It depends on [4Fe-4S] cluster as a cofactor.

It carries out the reaction chlorophyllide a + oxidized 2[4Fe-4S]-[ferredoxin] + 2 ADP + 2 phosphate = protochlorophyllide a + reduced 2[4Fe-4S]-[ferredoxin] + 2 ATP + 2 H2O. It functions in the pathway porphyrin-containing compound metabolism; chlorophyll biosynthesis (light-independent). In terms of biological role, component of the dark-operative protochlorophyllide reductase (DPOR) that uses Mg-ATP and reduced ferredoxin to reduce ring D of protochlorophyllide (Pchlide) to form chlorophyllide a (Chlide). This reaction is light-independent. The NB-protein (ChlN-ChlB) is the catalytic component of the complex. This Prochlorococcus marinus (strain SARG / CCMP1375 / SS120) protein is Light-independent protochlorophyllide reductase subunit B.